The sequence spans 642 residues: Threonine--tRNA ligase (642 aa).

Residues 1–61 (MPVITLPDGS…HEDASLSIIT (61 aa)) enclose the TGS domain. Residues 243–534 (DHRKIGKQLD…LIEEYAGRFP (292 aa)) are catalytic. 3 residues coordinate Zn(2+): C334, H385, and H511.

Belongs to the class-II aminoacyl-tRNA synthetase family. In terms of assembly, homodimer. It depends on Zn(2+) as a cofactor.

Its subcellular location is the cytoplasm. It carries out the reaction tRNA(Thr) + L-threonine + ATP = L-threonyl-tRNA(Thr) + AMP + diphosphate + H(+). Functionally, catalyzes the attachment of threonine to tRNA(Thr) in a two-step reaction: L-threonine is first activated by ATP to form Thr-AMP and then transferred to the acceptor end of tRNA(Thr). Also edits incorrectly charged L-seryl-tRNA(Thr). The polypeptide is Threonine--tRNA ligase (Shewanella amazonensis (strain ATCC BAA-1098 / SB2B)).